A 207-amino-acid polypeptide reads, in one-letter code: Thiamine-phosphate synthase (207 aa).

4-amino-2-methyl-5-(diphosphooxymethyl)pyrimidine is bound by residues 36 to 40 (QLRLK) and N68. Positions 69 and 88 each coordinate Mg(2+). 4-amino-2-methyl-5-(diphosphooxymethyl)pyrimidine is bound at residue T107. A 2-[(2R,5Z)-2-carboxy-4-methylthiazol-5(2H)-ylidene]ethyl phosphate-binding site is contributed by 134-136 (TGT). 4-amino-2-methyl-5-(diphosphooxymethyl)pyrimidine is bound at residue K137. Residue G164 coordinates 2-[(2R,5Z)-2-carboxy-4-methylthiazol-5(2H)-ylidene]ethyl phosphate.

It belongs to the thiamine-phosphate synthase family. It depends on Mg(2+) as a cofactor.

It catalyses the reaction 2-[(2R,5Z)-2-carboxy-4-methylthiazol-5(2H)-ylidene]ethyl phosphate + 4-amino-2-methyl-5-(diphosphooxymethyl)pyrimidine + 2 H(+) = thiamine phosphate + CO2 + diphosphate. The catalysed reaction is 2-(2-carboxy-4-methylthiazol-5-yl)ethyl phosphate + 4-amino-2-methyl-5-(diphosphooxymethyl)pyrimidine + 2 H(+) = thiamine phosphate + CO2 + diphosphate. It carries out the reaction 4-methyl-5-(2-phosphooxyethyl)-thiazole + 4-amino-2-methyl-5-(diphosphooxymethyl)pyrimidine + H(+) = thiamine phosphate + diphosphate. It functions in the pathway cofactor biosynthesis; thiamine diphosphate biosynthesis; thiamine phosphate from 4-amino-2-methyl-5-diphosphomethylpyrimidine and 4-methyl-5-(2-phosphoethyl)-thiazole: step 1/1. In terms of biological role, condenses 4-methyl-5-(beta-hydroxyethyl)thiazole monophosphate (THZ-P) and 2-methyl-4-amino-5-hydroxymethyl pyrimidine pyrophosphate (HMP-PP) to form thiamine monophosphate (TMP). This Rhodospirillum centenum (strain ATCC 51521 / SW) protein is Thiamine-phosphate synthase.